The following is a 473-amino-acid chain: ATP synthase subunit beta (473 aa).

153-160 contributes to the ATP binding site; that stretch reads GGAGVGKT.

It belongs to the ATPase alpha/beta chains family. As to quaternary structure, F-type ATPases have 2 components, CF(1) - the catalytic core - and CF(0) - the membrane proton channel. CF(1) has five subunits: alpha(3), beta(3), gamma(1), delta(1), epsilon(1). CF(0) has three main subunits: a(1), b(2) and c(9-12). The alpha and beta chains form an alternating ring which encloses part of the gamma chain. CF(1) is attached to CF(0) by a central stalk formed by the gamma and epsilon chains, while a peripheral stalk is formed by the delta and b chains.

It is found in the cell membrane. It catalyses the reaction ATP + H2O + 4 H(+)(in) = ADP + phosphate + 5 H(+)(out). Its function is as follows. Produces ATP from ADP in the presence of a proton gradient across the membrane. The catalytic sites are hosted primarily by the beta subunits. The polypeptide is ATP synthase subunit beta (Rickettsia africae (strain ESF-5)).